A 464-amino-acid polypeptide reads, in one-letter code: Cerebellar degeneration-related protein 2-like (464 aa).

Coiled coils occupy residues 31–154 (AAEL…RRKT), 201–264 (VSSL…KSRV), and 342–379 (MSIL…AEVQ). The interval 371–419 (ESLRHAEVQTSRPVSRDPSMKECRVAEPQQPPPTPPQTPSTPEALEGIS) is disordered. Residues 384-395 (VSRDPSMKECRV) show a composition bias toward basic and acidic residues. The span at 399 to 409 (QQPPPTPPQTP) shows a compositional bias: pro residues.

Belongs to the CDR2 family.

This is Cerebellar degeneration-related protein 2-like (cdr2l) from Danio rerio (Zebrafish).